A 276-amino-acid polypeptide reads, in one-letter code: NAD kinase (276 aa).

D66 acts as the Proton acceptor in catalysis. Residues 66 to 67, 139 to 140, D168, 179 to 184, and Q234 contribute to the NAD(+) site; these read DG, ND, and TAYNIS.

Belongs to the NAD kinase family. A divalent metal cation is required as a cofactor.

It is found in the cytoplasm. It carries out the reaction NAD(+) + ATP = ADP + NADP(+) + H(+). Functionally, involved in the regulation of the intracellular balance of NAD and NADP, and is a key enzyme in the biosynthesis of NADP. Catalyzes specifically the phosphorylation on 2'-hydroxyl of the adenosine moiety of NAD to yield NADP. The sequence is that of NAD kinase from Campylobacter lari (strain RM2100 / D67 / ATCC BAA-1060).